The following is a 296-amino-acid chain: Short-chain dehydrogenase/reductase ascJ (296 aa).

Positions 28, 66, and 93 each coordinate NADP(+). S155 functions as the Proton donor in the catalytic mechanism. Residues Y168, K172, and T205 each contribute to the NADP(+) site. The active-site Proton acceptor is Y168. K172 (lowers pKa of active site Tyr) is an active-site residue.

The protein belongs to the short-chain dehydrogenases/reductases (SDR) family.

The catalysed reaction is ascofuranol + A = ascofuranone + AH2. It participates in secondary metabolite biosynthesis; terpenoid biosynthesis. Short-chain dehydrogenase/reductase; part of the asc-2 gene cluster that mediates the biosynthesis of ascofuranone, a strong inhibitor of cyanide-insensitive alternative oxidases and a promising drug candidate against African trypanosomiasis. The first step in the pathway is performed by the non-reducing polyketide synthase ascC that produces orsellinic acid by condensing acetyl-CoA with 3 malonyl-CoA units. Orsellinic acid is then prenylated by the prenyltransferase ascA to yield ilicicolinic acid B. Ilicicolinic acid B is further reduced to ilicicolin B by the reductase ascB. The halogenase ascD then chlorinates ilicicolin B to produce ilicicolin A which is converted to ilicicolin A epoxide by the cytochrome P450 monooxygenase ascE that catalyzes stereoselective epoxidation of the terminal double bond of the prenyl group. Ilicicolin A epoxide is the last common precursor for the biosynthesis of ascofuranone and ascochlorin. The terpene cyclase ascF produces a monocyclic terpene, and the cyclization reaction is proposed to be initiated by protonation of the terminal epoxide of ilicicolin A epoxide to generate a monocyclic tertiarycation, which is followed by a series of hydride and methyl shifts with abstraction of proton, leading to the formation of the (14S,15R,19R)-trimethylcyclohexanone ring structure of ilicicolin C, which is finally reduced to ascochlorin by the dehydrogenase ascG. On the other hand, ilicicolin A epoxide is hydroxylated by the cytochrome P450 monooxygenase ascH, and the resultant product is cyclized by the terpene cyclase ascI to ascofuranol via protonation-initiated epoxide ring opening, which facilitates the 6-endo-tet cyclization to form the tetrahy-drofuran ring. Finally, ascofuranol is oxidized into ascofuranone by ascJ. In Acremonium egyptiacum (Oospora egyptiaca), this protein is Short-chain dehydrogenase/reductase ascJ.